A 66-amino-acid polypeptide reads, in one-letter code: Cold shock protein 2 (66 aa).

The region spanning 4–63 (GTVKWFNADKGFGFITGEDGTDVFVHFSAIQTDGFKTLDEGQKVTYDEEQGDRGPQATNV) is the CSD domain.

The protein resides in the cytoplasm. The sequence is that of Cold shock protein 2 (cspL) from Lactiplantibacillus plantarum (strain ATCC BAA-793 / NCIMB 8826 / WCFS1) (Lactobacillus plantarum).